Here is a 418-residue protein sequence, read N- to C-terminus: Glutamyl-tRNA reductase (418 aa).

Residues 49–52 (TCNR), serine 109, 114–116 (EPQ), and glutamine 120 contribute to the substrate site. The Nucleophile role is filled by cysteine 50. 189–194 (GAGETI) serves as a coordination point for NADP(+).

The protein belongs to the glutamyl-tRNA reductase family. As to quaternary structure, homodimer.

The catalysed reaction is (S)-4-amino-5-oxopentanoate + tRNA(Glu) + NADP(+) = L-glutamyl-tRNA(Glu) + NADPH + H(+). It functions in the pathway porphyrin-containing compound metabolism; protoporphyrin-IX biosynthesis; 5-aminolevulinate from L-glutamyl-tRNA(Glu): step 1/2. Catalyzes the NADPH-dependent reduction of glutamyl-tRNA(Glu) to glutamate 1-semialdehyde (GSA). The chain is Glutamyl-tRNA reductase from Salmonella choleraesuis (strain SC-B67).